The chain runs to 88 residues: Large ribosomal subunit protein bL27 (88 aa).

The protein belongs to the bacterial ribosomal protein bL27 family.

This is Large ribosomal subunit protein bL27 from Mycolicibacterium vanbaalenii (strain DSM 7251 / JCM 13017 / BCRC 16820 / KCTC 9966 / NRRL B-24157 / PYR-1) (Mycobacterium vanbaalenii).